Here is a 716-residue protein sequence, read N- to C-terminus: MSPHTGWPRTVNSSLLKKHRSSLCTCQHTSSFLPRSFSTTADRHVQQSADFSSTSRSYDRLGRRAKEKLLDREFFLSLLSSASTKREAKSYLARLKAQYPKSPDENKPEPEKLATAPTLPSGVNLGSFYGASRSVYESPVFRQGPSPTAPPSLEPVERLHLALVRLSTPQSLDDNIIDGVAKTLSQLNRLGLTCCVVVDPGTEGVASTLRQVAIEQADRLAVAIQKQPDSKSLRLDSVFSIDASRPGLPQVSSRKALLNPLRHGHTVILTPIAYTEDVPRAIIVPANDAVLALTKELAGLASTPDPDEDPMVTAERIGRLQKEVSLDRVILLDSLGGIPAFNRRQTSHVFINMEQEYDDIENELLQAREMVPATETSLLKAGPSSIADNNPVSKFVNAEVVPVPSGPTQELKTAAPQRSAIEGHLENLRVAQKALTMLPAASSGIITSPFEVASSAQPSPTSEFSAVGTRRQRNPLIHNLLTDKPLLSSSLPMSRRGPTNNGQGTVYPVTSHTTFVKRGMPLTMLPNPWTEPWTPQSRPRLKLDDPSIDLPRLVHLIEDSFDRKLDVQDYLNRVNDRLAGLIIAGEYEGGAILTWELPPGVEDDGSEASNARMVPYLDKFAVLKRSQGAGGVADIVFNAMVRSCFPNGVCWRSRKNNPVNKWYFERSLGTWKLSDTNWTMFWTTPSLVEDSQKFRDYEAVCRSTQPSWADDTGVVD.

A mitochondrion-targeting transit peptide spans Met-1–His-44. Disordered stretches follow at residues Tyr-99–Leu-119 and Leu-487–Pro-508. Residues Ser-102 to Lys-112 are compositionally biased toward basic and acidic residues. Positions Gly-497–Pro-508 are enriched in polar residues. Residues Ser-537 to Pro-706 form the N-acetyltransferase domain.

The protein belongs to the acetyltransferase family.

The protein localises to the mitochondrion. The catalysed reaction is L-glutamate + acetyl-CoA = N-acetyl-L-glutamate + CoA + H(+). Its pathway is amino-acid biosynthesis; L-arginine biosynthesis; N(2)-acetyl-L-ornithine from L-glutamate: step 1/4. In terms of biological role, N-acetylglutamate synthase involved in arginine biosynthesis. The protein is Amino-acid acetyltransferase, mitochondrial (arg2) of Neosartorya fischeri (strain ATCC 1020 / DSM 3700 / CBS 544.65 / FGSC A1164 / JCM 1740 / NRRL 181 / WB 181) (Aspergillus fischerianus).